Consider the following 949-residue polypeptide: RNA polymerase-associated protein RapA (949 aa).

In terms of domain architecture, Helicase ATP-binding spans Glu164–Asn332. An ATP-binding site is contributed by Asp177–Thr184. A DEAH box motif is present at residues Asp278–His281. The Helicase C-terminal domain maps to Arg474–His628.

The protein belongs to the SNF2/RAD54 helicase family. RapA subfamily. In terms of assembly, interacts with the RNAP. Has a higher affinity for the core RNAP than for the holoenzyme. Its ATPase activity is stimulated by binding to RNAP.

Functionally, transcription regulator that activates transcription by stimulating RNA polymerase (RNAP) recycling in case of stress conditions such as supercoiled DNA or high salt concentrations. Probably acts by releasing the RNAP, when it is trapped or immobilized on tightly supercoiled DNA. Does not activate transcription on linear DNA. Probably not involved in DNA repair. This is RNA polymerase-associated protein RapA from Stutzerimonas stutzeri (strain A1501) (Pseudomonas stutzeri).